A 355-amino-acid chain; its full sequence is Fe-S cluster assembly protein DRE2 (355 aa).

The N-terminal SAM-like domain stretch occupies residues 23-156 (TSFNPRTLLL…KPDYSASVAV (134 aa)). A linker region spans residues 157–247 (PLRLRRKDNS…EDTLLTEEDM (91 aa)). The disordered stretch occupies residues 189 to 214 (RKSVDMTDDVPEKDVPKVDSPKNDAP). Over residues 190-213 (KSVDMTDDVPEKDVPKVDSPKNDA) the composition is skewed to basic and acidic residues. The [2Fe-2S] cluster site is built by C257, C268, C271, and C273. The tract at residues 257–273 (CAPRAGKRRRACKDCTC) is fe-S binding site A. [4Fe-4S] cluster contacts are provided by C318, C321, C329, and C332. 2 consecutive short sequence motifs (cx2C motif) follow at residues 318 to 321 (CGNC) and 329 to 332 (CDGC). Positions 318 to 332 (CGNCSLGDAFRCDGC) are fe-S binding site B.

Belongs to the anamorsin family. In terms of assembly, monomer. Interacts with TAH18. Interacts with MIA40. [2Fe-2S] cluster serves as cofactor. Requires [4Fe-4S] cluster as cofactor.

Its subcellular location is the cytoplasm. It is found in the mitochondrion intermembrane space. In terms of biological role, component of the cytosolic iron-sulfur (Fe-S) protein assembly (CIA) machinery required for the maturation of extramitochondrial Fe-S proteins. Part of an electron transfer chain functioning in an early step of cytosolic Fe-S biogenesis, facilitating the de novo assembly of a [4Fe-4S] cluster on the scaffold complex CFD1-NBP35. Electrons are transferred to DRE2 from NADPH via the FAD- and FMN-containing protein TAH18. TAH18-DRE2 are also required for the assembly of the diferric tyrosyl radical cofactor of ribonucleotide reductase (RNR), probably by providing electrons for reduction during radical cofactor maturation in the catalytic small subunit RNR2. This chain is Fe-S cluster assembly protein DRE2, found in Botryotinia fuckeliana (strain B05.10) (Noble rot fungus).